The primary structure comprises 425 residues: Serine--tRNA ligase (425 aa).

Residue 231-233 participates in L-serine binding; it reads TAE. ATP is bound at residue 262-264; sequence RSE. E285 is a binding site for L-serine. 349-352 contacts ATP; the sequence is EISS. S385 contacts L-serine.

The protein belongs to the class-II aminoacyl-tRNA synthetase family. Type-1 seryl-tRNA synthetase subfamily. In terms of assembly, homodimer. The tRNA molecule binds across the dimer.

The protein resides in the cytoplasm. It carries out the reaction tRNA(Ser) + L-serine + ATP = L-seryl-tRNA(Ser) + AMP + diphosphate + H(+). The enzyme catalyses tRNA(Sec) + L-serine + ATP = L-seryl-tRNA(Sec) + AMP + diphosphate + H(+). It functions in the pathway aminoacyl-tRNA biosynthesis; selenocysteinyl-tRNA(Sec) biosynthesis; L-seryl-tRNA(Sec) from L-serine and tRNA(Sec): step 1/1. Its function is as follows. Catalyzes the attachment of serine to tRNA(Ser). Is also able to aminoacylate tRNA(Sec) with serine, to form the misacylated tRNA L-seryl-tRNA(Sec), which will be further converted into selenocysteinyl-tRNA(Sec). This is Serine--tRNA ligase from Bartonella tribocorum (strain CIP 105476 / IBS 506).